A 163-amino-acid polypeptide reads, in one-letter code: Nucleotide-binding protein BcerKBAB4_1061 (163 aa).

Belongs to the YajQ family.

Nucleotide-binding protein. In Bacillus mycoides (strain KBAB4) (Bacillus weihenstephanensis), this protein is Nucleotide-binding protein BcerKBAB4_1061.